The primary structure comprises 4814 residues: Nonribosomal peptide synthetase SIDC (4814 aa).

The tract at residues 21 to 453 (PGPTLLHQLV…MKTSGCHGAA (433 aa)) is adenylation 1. The Carrier 1 domain maps to 528–601 (DLKKSTEPEL…HLVSSIKIID (74 aa)). Serine 562 carries the O-(pantetheine 4'-phosphoryl)serine modification. A condensation 1 region spans residues 637–1045 (VQDIIPCTNL…SLLESMRSME (409 aa)). The adenylation 2 stretch occupies residues 1101-1488 (TYTDLNRNAN…SRVSSATAAV (388 aa)). 2 consecutive Carrier domains span residues 1589-1666 (EDWN…HSSH) and 2134-2210 (SSWT…FENG). O-(pantetheine 4'-phosphoryl)serine occurs at positions 1626 and 2171. Condensation stretches follow at residues 1706–2210 (LQEA…FENG) and 2243–2649 (LPCT…HQHD). Residues 2709 to 3100 (TFAQLNSIGN…IRSVKNIHDV (392 aa)) form an adenylation 3 region. In terms of domain architecture, Carrier 4 spans 3203–3280 (SKDSAGYQKL…DLAVALSTAS (78 aa)). Serine 3240 is subject to O-(pantetheine 4'-phosphoryl)serine. The segment at 3319 to 3732 (YIYPCSPLQQ…VQVETALVDA (414 aa)) is condensation 4. A Carrier 5 domain is found at 3747 to 3823 (EVWGPAADVL…YLSSLVMRLT (77 aa)). Serine 3784 bears the O-(pantetheine 4'-phosphoryl)serine mark. A condensation 5 region spans residues 3857 to 4258 (DILPTTPLQD…YVLRHAEEDV (402 aa)). A Carrier 6 domain is found at 4295-4368 (NATSLAIRKV…HMAEQVAALG (74 aa)). Serine 4329 is subject to O-(pantetheine 4'-phosphoryl)serine. Residues 4504–4686 (ETLLRLRIHH…HEDMQKITAD (183 aa)) are condensation 6.

This sequence belongs to the NRP synthetase family. The cofactor is pantetheine 4'-phosphate.

It functions in the pathway siderophore biosynthesis. Nonribosomal peptide synthetase; part of the gene cluster that mediates the biosynthesis of at least 11 siderophores, including beauverichelin A, dimerumic acid (DA), Na-dimethyl coprogen (NADC), eleutherazine B, ferricrocin (FC), fusarinine A, fusarinine C (FsC), metachelin A, mevalonolactone, rhodotorulic acid (RA) and tenellin. This cocktail of siderophores for iron metabolism is essential for virulence, and more specifically for the fungal virulence in penetrating through the host cuticle. Siderophore synthesis is also involved in conidial germination under iron-deficient conditions. SIDC catalyzes the assembly of ferricrocin whereas SIDD catalyzes the assembly of fusarinine C. In Beauveria bassiana (strain ARSEF 2860) (White muscardine disease fungus), this protein is Nonribosomal peptide synthetase SIDC.